A 121-amino-acid chain; its full sequence is Prefoldin subunit beta (121 aa).

This sequence belongs to the prefoldin subunit beta family. In terms of assembly, heterohexamer of two alpha and four beta subunits.

It is found in the cytoplasm. Its function is as follows. Molecular chaperone capable of stabilizing a range of proteins. Seems to fulfill an ATP-independent, HSP70-like function in archaeal de novo protein folding. This is Prefoldin subunit beta from Caldivirga maquilingensis (strain ATCC 700844 / DSM 13496 / JCM 10307 / IC-167).